A 461-amino-acid chain; its full sequence is Ribitol-5-phosphate transferase FKTN (461 aa).

Over 1–7 the chain is Cytoplasmic; it reads MSRINKN. The tract at residues 6–27 is required and sufficient for interaction with POMGNT1; that stretch reads KNVVLALLTLTSSAFLLFQLYY. The helical; Signal-anchor for type II membrane protein transmembrane segment at 8 to 28 threads the bilayer; the sequence is VVLALLTLTSSAFLLFQLYYY. Residues 29-461 lie on the Lumenal side of the membrane; the sequence is KHYLSTKNGA…SEWDEVIQLY (433 aa). Asn-92 is a glycosylation site (N-linked (GlcNAc...) asparagine).

This sequence belongs to the LicD transferase family. In terms of assembly, forms a complex composed of FKTN/fukutin, FKRP and RXYLT1/TMEM5. Interacts (via transmembrane domain) with POMGNT1; the interaction is direct and is required for normal POMGNT1 location in Golgi membranes. Expressed in the retina (at protein level). Widely expressed with highest expression in brain, heart, pancreas and skeletal muscle. Expressed at similar levels in control fetal and adult brain. Expressed in migrating neurons, including Cajar-Retzius cells and adult cortical neurons, as well as hippocampal pyramidal cells and cerebellar Purkinje cells. No expression observed in the glia limitans, the subpial astrocytes (which contribute to basement membrane formation) or other glial cells.

The protein resides in the golgi apparatus membrane. Its subcellular location is the cytoplasm. The protein localises to the nucleus. It catalyses the reaction 3-O-[beta-D-GalNAc-(1-&gt;3)-beta-D-GlcNAc-(1-&gt;4)-(O-6-P-alpha-D-Man)]-Thr-[protein] + CDP-L-ribitol = 3-O-[Rib-ol-P-3-beta-D-GalNAc-(1-&gt;3)-beta-D-GlcNAc-(1-&gt;4)-(O-6-P-alpha-D-Man)]-Thr-[protein] + CMP + H(+). It functions in the pathway protein modification; protein glycosylation. Catalyzes the transfer of a ribitol-phosphate from CDP-ribitol to the distal N-acetylgalactosamine of the phosphorylated O-mannosyl trisaccharide (N-acetylgalactosamine-beta-3-N-acetylglucosamine-beta-4-(phosphate-6-)mannose), a carbohydrate structure present in alpha-dystroglycan (DAG1). This constitutes the first step in the formation of the ribitol 5-phosphate tandem repeat which links the phosphorylated O-mannosyl trisaccharide to the ligand binding moiety composed of repeats of 3-xylosyl-alpha-1,3-glucuronic acid-beta-1. Required for normal location of POMGNT1 in Golgi membranes, and for normal POMGNT1 activity. May interact with and reinforce a large complex encompassing the outside and inside of muscle membranes. Could be involved in brain development. This Homo sapiens (Human) protein is Ribitol-5-phosphate transferase FKTN.